The chain runs to 215 residues: Adenylate kinase (215 aa).

10–15 provides a ligand contact to ATP; the sequence is GAGKGT. The NMP stretch occupies residues 30-59; sequence STGDMFRAAMKNETEMGKLAKSFIDKGELV. AMP contacts are provided by residues Thr31, Arg36, 57-59, 86-89, and Gln93; these read ELV and GYPR. Residues 127–165 form an LID region; that stretch reads GRYICRNCGATYHKIFNPTKVEGVCDVCGSHDLYQRADD. An ATP-binding site is contributed by Arg128. 2 residues coordinate Zn(2+): Cys131 and Cys134. 137–138 contributes to the ATP binding site; the sequence is TY. Zn(2+) is bound by residues Cys151 and Cys154. AMP is bound by residues Arg162 and Arg173. Gln201 is a binding site for ATP.

It belongs to the adenylate kinase family. Monomer.

It is found in the cytoplasm. It carries out the reaction AMP + ATP = 2 ADP. It functions in the pathway purine metabolism; AMP biosynthesis via salvage pathway; AMP from ADP: step 1/1. Functionally, catalyzes the reversible transfer of the terminal phosphate group between ATP and AMP. Plays an important role in cellular energy homeostasis and in adenine nucleotide metabolism. This Lactococcus lactis subsp. lactis (strain IL1403) (Streptococcus lactis) protein is Adenylate kinase.